Reading from the N-terminus, the 573-residue chain is MTLTQLLHDKLAAALIAAGVPDAQPLLQPASRPEFGDFQANGVMAAAKQRKMNPRELAQQVIDKLDLAGIASKIEIAGPGFINITLAPDFLAKRLDTVLDDARLGVRSVTEPQRVMVEYSSPNLAKEMHVGHLRSTIIGDTLARVVEFLGNNMVRGNHVGDWGTQFGMLTAYLVETRQAGKADLELSDLETFYRNAKIRFDEDPVFADTARNYVVRLQGGDADVLKLWEQFVDVSLAHCEAVYRKLGVGLTRADVRGESAYNDDLPVIVDELAAKNLLSEDDGAKVVYLDEFRNHDGDPMGVIVQKKDGGFLYTTTDLGAVRYRHKELNLDRVIYVVDARQSQHFQQMFTICRKAGFAPEAMSLEHVGFGTMMGDDGKPFKTRSGGTVKLIELLDEAEERAYALVSEKNPDLPEEEKRKIAHAVGIGAVKYADLSKNRNSDYIFNWDLMLAFEGNTAPYLQYAYTRVASIFRKVDRFDASAPLLITEPAEKQLALMLAQFSDVLNEVARTCFPHLLTQYLYQVATQFMRFYEACPILKSEGATQASRLKLARITADTLKTGLGLLGIEVLESM.

The 'HIGH' region signature appears at 122–132 (PNLAKEMHVGH).

Belongs to the class-I aminoacyl-tRNA synthetase family. In terms of assembly, monomer.

The protein localises to the cytoplasm. It carries out the reaction tRNA(Arg) + L-arginine + ATP = L-arginyl-tRNA(Arg) + AMP + diphosphate. The polypeptide is Arginine--tRNA ligase (Laribacter hongkongensis (strain HLHK9)).